Reading from the N-terminus, the 184-residue chain is dCTP deaminase (184 aa).

DCTP-binding positions include 107–112, 131–133, Q152, Y166, and Q176; these read KSTYAR and TLE. E133 acts as the Proton donor/acceptor in catalysis.

Belongs to the dCTP deaminase family. In terms of assembly, homotrimer.

It carries out the reaction dCTP + H2O + H(+) = dUTP + NH4(+). It participates in pyrimidine metabolism; dUMP biosynthesis; dUMP from dCTP (dUTP route): step 1/2. Its function is as follows. Catalyzes the deamination of dCTP to dUTP. The polypeptide is dCTP deaminase (Novosphingobium aromaticivorans (strain ATCC 700278 / DSM 12444 / CCUG 56034 / CIP 105152 / NBRC 16084 / F199)).